Here is a 557-residue protein sequence, read N- to C-terminus: Eudesmanediol synthase (557 aa).

Mg(2+) contacts are provided by aspartate 310 and aspartate 314. Substrate contacts are provided by aspartate 310, aspartate 314, and arginine 450. Residues 310-314 (DDTFD) carry the DDXXD motif motif. Asparagine 453 and serine 457 together coordinate Mg(2+).

Belongs to the terpene synthase family. As to quaternary structure, monomer. It depends on Mg(2+) as a cofactor. The cofactor is Mn(2+).

It localises to the cytoplasm. It carries out the reaction (2E,6E)-farnesyl diphosphate + 2 H2O = 7-epi-ent-eudesmane-5,11-diol + diphosphate. It functions in the pathway secondary metabolite biosynthesis; terpenoid biosynthesis. Functionally, component of the volatile terpenes biosynthesis pathways. Dihydroxylated sesquiterpenoid synthase that generates dually hydroxylated products directly from (E,E)-farnesyl diphosphate, primarily eudesmane-2,11-diol, along with two closely related structural isomers. The sequence is that of Eudesmanediol synthase from Zea mays (Maize).